Reading from the N-terminus, the 513-residue chain is Bifunctional purine biosynthesis protein PurH (513 aa).

One can recognise an MGS-like domain in the interval 1–145 (MTKRALISVS…KNYQDVTAVV (145 aa)).

This sequence belongs to the PurH family.

The catalysed reaction is (6R)-10-formyltetrahydrofolate + 5-amino-1-(5-phospho-beta-D-ribosyl)imidazole-4-carboxamide = 5-formamido-1-(5-phospho-D-ribosyl)imidazole-4-carboxamide + (6S)-5,6,7,8-tetrahydrofolate. It carries out the reaction IMP + H2O = 5-formamido-1-(5-phospho-D-ribosyl)imidazole-4-carboxamide. It functions in the pathway purine metabolism; IMP biosynthesis via de novo pathway; 5-formamido-1-(5-phospho-D-ribosyl)imidazole-4-carboxamide from 5-amino-1-(5-phospho-D-ribosyl)imidazole-4-carboxamide (10-formyl THF route): step 1/1. Its pathway is purine metabolism; IMP biosynthesis via de novo pathway; IMP from 5-formamido-1-(5-phospho-D-ribosyl)imidazole-4-carboxamide: step 1/1. The protein is Bifunctional purine biosynthesis protein PurH of Enterococcus faecalis (strain ATCC 700802 / V583).